The sequence spans 357 residues: Probable leucine aminopeptidase TRV_02148.1 (357 aa).

The N-terminal stretch at 1-15 is a signal peptide; that stretch reads MKVLAALALSALAMA. Asn-76 is a glycosylation site (N-linked (GlcNAc...) asparagine). Positions 167 and 185 each coordinate Zn(2+). Positions 169 to 188 are disordered; that stretch reads DSINGKNPQGEAPGADDNGS. An N-linked (GlcNAc...) asparagine glycan is attached at Asn-186. The Zn(2+) site is built by Glu-224 and Asp-251. Asn-269 is a glycosylation site (N-linked (GlcNAc...) asparagine). A disulfide bridge connects residues Cys-291 and Cys-295. His-324 lines the Zn(2+) pocket.

The protein belongs to the peptidase M28 family. M28E subfamily. As to quaternary structure, monomer. Requires Zn(2+) as cofactor.

The protein localises to the secreted. In terms of biological role, probable extracellular aminopeptidase which contributes to pathogenicity. The polypeptide is Probable leucine aminopeptidase TRV_02148.1 (Trichophyton verrucosum (strain HKI 0517)).